The chain runs to 96 residues: Co-chaperonin GroES (96 aa).

Belongs to the GroES chaperonin family. As to quaternary structure, heptamer of 7 subunits arranged in a ring. Interacts with the chaperonin GroEL.

It localises to the cytoplasm. Functionally, together with the chaperonin GroEL, plays an essential role in assisting protein folding. The GroEL-GroES system forms a nano-cage that allows encapsulation of the non-native substrate proteins and provides a physical environment optimized to promote and accelerate protein folding. GroES binds to the apical surface of the GroEL ring, thereby capping the opening of the GroEL channel. In Hahella chejuensis (strain KCTC 2396), this protein is Co-chaperonin GroES.